A 74-amino-acid chain; its full sequence is Spore germination protein GerE (74 aa).

The HTH luxR-type domain maps to 5 to 70; it reads EFQSKPLLTK…QAVVELLRMG (66 aa). The H-T-H motif DNA-binding region spans 29–48; it reads TKEIASELFISEKTVRNHIS.

Functionally, involved in the regulation of spore formation. Directs the transcription of several genes that encode structural components of the protein coat that encases the mature spore (CotB, CotC, CotG, CotS, CotV, CotW, CotX, CotY and CotZ). Also controls the cgeAB and cgeCDE operons. This chain is Spore germination protein GerE (gerE), found in Bacillus subtilis (strain 168).